The chain runs to 347 residues: MDNKLGLEIIEVVEQAAIAAARWMGKGDNKTADQVAVEAMREKLNQIPMRGRIVIGEGTRDEAPMLYIGEEVGICTRPDAEQFCRVEELVEIDIAVDPCEGTNLVAKGQNGSMAVLAISEKGGLLHAPDIYMQKLAAPPQAKGKVHLDYPPEKNLQIIAESLDREVSDLTVVVMDRKRHVDLIRQIREAGARVKLITDGDISAALSAGFNGTGIHALMGIGAAPEGVISAAALRCLGAHFQGRLIYDPEVVQAGTYLPPVEETRRQLKEQGIEDPDKVWECEELASGKEVLFAATGITDGDLMRGVRFFGGGARTETLVISSQSRTVRFVDTIHMKDGQQPRSLQLR.

Residues D33, E57, D97, and E100 each coordinate Mn(2+). Substrate is bound by residues 100–102, Y131, 176–178, and 198–200; these read EGT, RKR, and DGD. A Mn(2+)-binding site is contributed by E225.

It belongs to the FBPase class 2 family. Homotetramer. The cofactor is Mn(2+).

The enzyme catalyses beta-D-fructose 1,6-bisphosphate + H2O = beta-D-fructose 6-phosphate + phosphate. It carries out the reaction D-sedoheptulose 1,7-bisphosphate + H2O = D-sedoheptulose 7-phosphate + phosphate. It functions in the pathway carbohydrate biosynthesis; Calvin cycle. In terms of biological role, catalyzes the hydrolysis of fructose 1,6-bisphosphate (Fru 1,6-P2) and sedoheptulose 1,7-bisphosphate (Sed 1,7-P2) to fructose 6-phosphate and sedoheptulose 7-phosphate, respectively. The polypeptide is D-fructose 1,6-bisphosphatase class 2/sedoheptulose 1,7-bisphosphatase (Synechococcus sp. (strain JA-3-3Ab) (Cyanobacteria bacterium Yellowstone A-Prime)).